We begin with the raw amino-acid sequence, 222 residues long: N-acetyltransferase 8B (222 aa).

Topologically, residues 1–42 are cytoplasmic; it reads MVSYHICEYQDSDYKSVVDVFTKGAEEYIPSTFRHLLLLPRT. A helical; Signal-anchor for type II membrane protein transmembrane segment spans residues 43–67; the sequence is LLLLLGVSLALVLVSGSWLLAVVCI. One can recognise an N-acetyltransferase domain in the interval 62-217; that stretch reads LAVVCIFFLL…VGIRFVQLNY (156 aa). Residues 68–222 lie on the Lumenal side of the membrane; it reads FFLLPFLWFL…VQLNYSFPSA (155 aa). The residue at position 99 (K99) is an N6-acetyllysine.

This sequence belongs to the NAT8 family. Acetylation on Lys-99 modulates enzymatic activity.

Its subcellular location is the endoplasmic reticulum-Golgi intermediate compartment membrane. The protein localises to the endoplasmic reticulum membrane. The catalysed reaction is L-lysyl-[protein] + acetyl-CoA = N(6)-acetyl-L-lysyl-[protein] + CoA + H(+). Its function is as follows. Endoplasmic reticulum (ER)-membrane-bound lysine N-acetyltransferase catalyzing the N6-acetylation of lysine residues in the lumen of the ER in various proteins, including PROM1 and BACE1, using acetyl-CoA as acetyl donor. Thereby, may regulate apoptosis through the acetylation and the regulation of the expression of PROM1. Acetylates and stabilizes BACE1 immature protein, leading to increased steady-state levels in neurons. By acting on BACE1 expression, may regulate amyloid beta-peptide formation. N(6)-lysine acetylation in ER maintains protein homeostasis and regulates reticulophagy. This is N-acetyltransferase 8B from Rattus norvegicus (Rat).